The chain runs to 508 residues: Cobyric acid synthase (508 aa).

In terms of domain architecture, GATase cobBQ-type spans S266 to V464. The Nucleophile role is filled by C347. Residue H456 is part of the active site.

This sequence belongs to the CobB/CobQ family. CobQ subfamily.

It participates in cofactor biosynthesis; adenosylcobalamin biosynthesis. Catalyzes amidations at positions B, D, E, and G on adenosylcobyrinic A,C-diamide. NH(2) groups are provided by glutamine, and one molecule of ATP is hydrogenolyzed for each amidation. The sequence is that of Cobyric acid synthase from Methylibium petroleiphilum (strain ATCC BAA-1232 / LMG 22953 / PM1).